Here is a 290-residue protein sequence, read N- to C-terminus: Gene 69 protein (290 aa).

This chain is Gene 69 protein (69), found in Mycobacterium phage L5 (Mycobacteriophage L5).